The chain runs to 141 residues: Nucleoside diphosphate kinase (141 aa).

The ATP site is built by lysine 11, phenylalanine 59, arginine 87, threonine 93, arginine 104, and asparagine 114. The Pros-phosphohistidine intermediate role is filled by histidine 117.

The protein belongs to the NDK family. In terms of assembly, homotetramer. Mg(2+) is required as a cofactor.

It localises to the cytoplasm. It carries out the reaction a 2'-deoxyribonucleoside 5'-diphosphate + ATP = a 2'-deoxyribonucleoside 5'-triphosphate + ADP. The enzyme catalyses a ribonucleoside 5'-diphosphate + ATP = a ribonucleoside 5'-triphosphate + ADP. Major role in the synthesis of nucleoside triphosphates other than ATP. The ATP gamma phosphate is transferred to the NDP beta phosphate via a ping-pong mechanism, using a phosphorylated active-site intermediate. This Delftia acidovorans (strain DSM 14801 / SPH-1) protein is Nucleoside diphosphate kinase.